Here is a 427-residue protein sequence, read N- to C-terminus: Serine hydroxymethyltransferase (427 aa).

Residues Leu-122 and 126-128 contribute to the (6S)-5,6,7,8-tetrahydrofolate site; that span reads GHL. Position 231 is an N6-(pyridoxal phosphate)lysine (Lys-231). A (6S)-5,6,7,8-tetrahydrofolate-binding site is contributed by 355 to 357; that stretch reads SPF.

It belongs to the SHMT family. Homodimer. The cofactor is pyridoxal 5'-phosphate.

It is found in the cytoplasm. It carries out the reaction (6R)-5,10-methylene-5,6,7,8-tetrahydrofolate + glycine + H2O = (6S)-5,6,7,8-tetrahydrofolate + L-serine. Its pathway is one-carbon metabolism; tetrahydrofolate interconversion. The protein operates within amino-acid biosynthesis; glycine biosynthesis; glycine from L-serine: step 1/1. Functionally, catalyzes the reversible interconversion of serine and glycine with tetrahydrofolate (THF) serving as the one-carbon carrier. This reaction serves as the major source of one-carbon groups required for the biosynthesis of purines, thymidylate, methionine, and other important biomolecules. Also exhibits THF-independent aldolase activity toward beta-hydroxyamino acids, producing glycine and aldehydes, via a retro-aldol mechanism. The protein is Serine hydroxymethyltransferase of Nostoc sp. (strain PCC 7120 / SAG 25.82 / UTEX 2576).